A 137-amino-acid chain; its full sequence is uncharacterized protein (137 aa).

Residues 4–21 (ISWQIVLAVIGVVAGFII) form a helical membrane-spanning segment.

It localises to the membrane. This is an uncharacterized protein from Archaeoglobus fulgidus (strain ATCC 49558 / DSM 4304 / JCM 9628 / NBRC 100126 / VC-16).